Consider the following 380-residue polypeptide: Cysteine protease ATG4A (380 aa).

C60 functions as the Nucleophile in the catalytic mechanism. Residues D262 and H264 contribute to the active site. An LIR motif is present at residues 375-378 (FEIL).

It belongs to the peptidase C54 family.

The protein resides in the cytoplasm. The catalysed reaction is [protein]-C-terminal L-amino acid-glycyl-phosphatidylethanolamide + H2O = [protein]-C-terminal L-amino acid-glycine + a 1,2-diacyl-sn-glycero-3-phosphoethanolamine. Its function is as follows. Cysteine protease that plays a key role in autophagy by mediating both proteolytic activation and delipidation of ATG8 family proteins. The protease activity is required for proteolytic activation of ATG8 family proteins: cleaves the C-terminal amino acid of ATG8 proteins to reveal a C-terminal glycine. Exposure of the glycine at the C-terminus is essential for ATG8 proteins conjugation to phosphatidylethanolamine (PE) and insertion to membranes, which is necessary for autophagy. Protease activity is also required to counteract formation of high-molecular weight conjugates of ATG8 proteins (ATG8ylation): acts as a deubiquitinating-like enzyme that removes ATG8 conjugated to other proteins, such as ATG3. In addition to the protease activity, also mediates delipidation of ATG8 family proteins. Catalyzes delipidation of PE-conjugated forms of ATG8 proteins during macroautophagy. The polypeptide is Cysteine protease ATG4A (Gallus gallus (Chicken)).